Consider the following 321-residue polypeptide: MSIKEWFEDKRKITALLKNSVERDSKDANETEKNKNKSIDYAKIKKLWAQCDNCENLLYLRFLRENQSVCKECGYYLQMNSSDRIELLIDRDTWRPMDEDMYTLDVLQFYSENEPSHSDNLNSEDESYKDHITFYQIETGLTDAIQTGIGQLNGLTIALGVMDFQFMGGSMGSVVGEKITRLIERATAESLPLIMVCASGGARMQEGSFSLMQMAKIASALYIHQKEKKLLYISILTSPTTGGVTASFGMLGDIIIAEPKAYIAFAGKRVIEQTLGQKVIEDFQVTEHLFGHGLFDLIVPRNLLKGVLSELFWFYVLRSSL.

One can recognise a CoA carboxyltransferase N-terminal domain in the interval 47-321 (LWAQCDNCEN…FWFYVLRSSL (275 aa)). Zn(2+)-binding residues include cysteine 51, cysteine 54, cysteine 70, and cysteine 73. Residues 51–73 (CDNCENLLYLRFLRENQSVCKEC) form a C4-type zinc finger.

This sequence belongs to the AccD/PCCB family. Acetyl-CoA carboxylase is a heterohexamer composed of biotin carboxyl carrier protein, biotin carboxylase and 2 subunits each of ACCase subunit alpha and ACCase plastid-coded subunit beta (accD). The cofactor is Zn(2+).

It localises to the plastid. The protein resides in the chloroplast stroma. It carries out the reaction N(6)-carboxybiotinyl-L-lysyl-[protein] + acetyl-CoA = N(6)-biotinyl-L-lysyl-[protein] + malonyl-CoA. It functions in the pathway lipid metabolism; malonyl-CoA biosynthesis; malonyl-CoA from acetyl-CoA: step 1/1. Component of the acetyl coenzyme A carboxylase (ACC) complex. Biotin carboxylase (BC) catalyzes the carboxylation of biotin on its carrier protein (BCCP) and then the CO(2) group is transferred by the transcarboxylase to acetyl-CoA to form malonyl-CoA. The chain is Acetyl-coenzyme A carboxylase carboxyl transferase subunit beta, chloroplastic from Pinus thunbergii (Japanese black pine).